The primary structure comprises 28 residues: Sarcolamban A (28 aa).

A helical membrane pass occupies residues 7–27; it reads LFTTFGILAILLFFLYLIYAV.

In terms of assembly, interacts with SERCA. In terms of tissue distribution, strongly expressed in embryonic and larval somatic muscles and postembryonic heart.

It localises to the sarcoplasmic reticulum membrane. The protein localises to the cell membrane. It is found in the sarcolemma. Its subcellular location is the T-tubule. Plays an essential role in the regulation of calcium transport at the sarcoplasmic reticulum (SR), which is secondarily required for regular muscle contraction. The sequence is that of Sarcolamban A from Drosophila melanogaster (Fruit fly).